The following is a 103-amino-acid chain: N(4)-acetylcytidine amidohydrolase (103 aa).

The ASCH domain occupies 7–93 (TFFERFEQDI…VIAEIYPGLE (87 aa)). The active-site Proton acceptor is lysine 21. Threonine 24 acts as the Nucleophile in catalysis. Glutamate 74 serves as the catalytic Proton donor.

Belongs to the N(4)-acetylcytidine amidohydrolase family.

The enzyme catalyses N(4)-acetylcytidine + H2O = cytidine + acetate + H(+). The catalysed reaction is N(4)-acetyl-2'-deoxycytidine + H2O = 2'-deoxycytidine + acetate + H(+). It catalyses the reaction N(4)-acetylcytosine + H2O = cytosine + acetate + H(+). Functionally, catalyzes the hydrolysis of N(4)-acetylcytidine (ac4C). This chain is N(4)-acetylcytidine amidohydrolase, found in Shewanella putrefaciens (strain CN-32 / ATCC BAA-453).